Consider the following 175-residue polypeptide: Regenerating islet-derived protein 3-gamma (175 aa).

Residues 1–26 (MLPPMALPSVSWMLLSCLILLCQVQG) form the signal peptide. A propeptide spanning residues 27-37 (EETQKELPSPR) is cleaved from the precursor. Disulfide bonds link Cys40–Cys51, Cys68–Cys171, and Cys146–Cys163. The region spanning 47–172 (YGSPCYALFL…CDAKLPYVCK (126 aa)) is the C-type lectin domain. Residues 103 to 118 (WIGLHDPTQGSEPDGD) are sufficient to activate EXTL3. His107 contacts Zn(2+). The short motif at 114–116 (EPD) is the EPN element. Zn(2+) is bound by residues Glu121 and His145.

As to quaternary structure, forms a hexameric membrane-permeabilizing oligomeric pore on membrane phospholipids. The hexamer is formed by three dimers related by helical symmetry. Forms filaments, filamentation traps pore complexes and limits damage to host cells. Interacts with EXTL3. In terms of processing, proteolytic processing by trypsin removes an inhibitory N-terminal propeptide and is essential for peptidoglycan binding and antibacterial activity. Predominantly expressed in pancreas, where it may be restricted to exocrine pancreas. Moderate expression levels in testis and weak in heart, kidney and placenta.

Its subcellular location is the secreted. The protein localises to the cytoplasm. Lipopolysaccharide inhibits pore-forming activity, explaining why is bactericidal for Gram-positive but not Gram-negative bacteria. In terms of biological role, bactericidal C-type lectin which acts exclusively against Gram-positive bacteria and mediates bacterial killing by binding to surface-exposed carbohydrate moieties of peptidoglycan. Restricts bacterial colonization of the intestinal epithelial surface and consequently limits activation of adaptive immune responses by the microbiota. Acts as a hormone in response to different stimuli like anti-inflammatory signals, such as IL17A, or gut microbiome. Is secreted by different cell types to activate its receptor EXTL3 and induce cell specific signaling pathways. Induced by IL17A in keratinocytes, regulates keratinocyte proliferation and differentiation after skin injury. In parallel, inhibits skin inflammation through the inhibition of inflammatory cytokines such as IL6 and TNF. Induced by IL22 in lung epithelial cells, inhibits cytokine production and regulates allergic airway inflammation. Induced in small intestine by inulin-enriched diet and Lactobacillus gasseri enriched microbiome, plays a role in the improvement of gut barrier function, the regulation of energy balance and glucose levels. Modulates microbiota composition in duodenal contents. Produced by nociceptor in response to endotoxins, prevents endotoxic death by targeting kynurenine pathway in microglia. Functionally, has bacteriostatic activity. Its function is as follows. Has bactericidal activity against L.monocytogenes and methicillin-resistant S.aureus. The chain is Regenerating islet-derived protein 3-gamma from Homo sapiens (Human).